We begin with the raw amino-acid sequence, 278 residues long: Dermonecrotic toxin LlSicTox-alphaIII3iii (278 aa).

His5 is a catalytic residue. Glu25 and Asp27 together coordinate Mg(2+). Catalysis depends on His40, which acts as the Nucleophile. Cys44 and Cys50 form a disulfide bridge. Asp84 contributes to the Mg(2+) binding site.

The protein belongs to the arthropod phospholipase D family. Class I subfamily. It depends on Mg(2+) as a cofactor. Expressed by the venom gland.

It is found in the secreted. It catalyses the reaction an N-(acyl)-sphingosylphosphocholine = an N-(acyl)-sphingosyl-1,3-cyclic phosphate + choline. The catalysed reaction is an N-(acyl)-sphingosylphosphoethanolamine = an N-(acyl)-sphingosyl-1,3-cyclic phosphate + ethanolamine. The enzyme catalyses a 1-acyl-sn-glycero-3-phosphocholine = a 1-acyl-sn-glycero-2,3-cyclic phosphate + choline. It carries out the reaction a 1-acyl-sn-glycero-3-phosphoethanolamine = a 1-acyl-sn-glycero-2,3-cyclic phosphate + ethanolamine. Dermonecrotic toxins cleave the phosphodiester linkage between the phosphate and headgroup of certain phospholipids (sphingolipid and lysolipid substrates), forming an alcohol (often choline) and a cyclic phosphate. This toxin acts on sphingomyelin (SM). It may also act on ceramide phosphoethanolamine (CPE), lysophosphatidylcholine (LPC) and lysophosphatidylethanolamine (LPE), but not on lysophosphatidylserine (LPS), and lysophosphatidylglycerol (LPG). It acts by transphosphatidylation, releasing exclusively cyclic phosphate products as second products. Induces dermonecrosis, hemolysis, increased vascular permeability, edema, inflammatory response, and platelet aggregation. The protein is Dermonecrotic toxin LlSicTox-alphaIII3iii of Loxosceles laeta (South American recluse spider).